We begin with the raw amino-acid sequence, 378 residues long: Chorismate synthase (378 aa).

Positions 42-61 (IQAELDRRRPGQSPITTPRQ) are disordered. NADP(+) is bound at residue Arg-49. FMN is bound by residues 126 to 128 (RAS), Gly-287, 302 to 306 (KPTAT), and Arg-328.

It belongs to the chorismate synthase family. In terms of assembly, homotetramer. Requires FMNH2 as cofactor.

The catalysed reaction is 5-O-(1-carboxyvinyl)-3-phosphoshikimate = chorismate + phosphate. It functions in the pathway metabolic intermediate biosynthesis; chorismate biosynthesis; chorismate from D-erythrose 4-phosphate and phosphoenolpyruvate: step 7/7. Its function is as follows. Catalyzes the anti-1,4-elimination of the C-3 phosphate and the C-6 proR hydrogen from 5-enolpyruvylshikimate-3-phosphate (EPSP) to yield chorismate, which is the branch point compound that serves as the starting substrate for the three terminal pathways of aromatic amino acid biosynthesis. This reaction introduces a second double bond into the aromatic ring system. The sequence is that of Chorismate synthase from Synechococcus sp. (strain JA-2-3B'a(2-13)) (Cyanobacteria bacterium Yellowstone B-Prime).